Here is a 251-residue protein sequence, read N- to C-terminus: Derlin-1 (251 aa).

Ser-2 carries the N-acetylserine modification. Residues 2–15 (SDIGDWFRSIPTIT) are Cytoplasmic-facing. Residues 16-31 (RYWFAATVAVPLVGKL) form a helical membrane-spanning segment. Residues 32-69 (GLISPAYFFLWPEAFLYRFQIWRPITATFYFPVGPGTG) lie on the Lumenal side of the membrane. The chain crosses the membrane as a helical span at residues 70–89 (FLYLVNLYFLYQYSTRLETG). Over 90-94 (AFDGR) the chain is Cytoplasmic. A helical membrane pass occupies residues 95–115 (PADYLFMLLFNWICIVITGLA). Topologically, residues 116–122 (MDMQLLM) are lumenal. A helical transmembrane segment spans residues 123–137 (IPLIMSVLYVWAQLN). Topologically, residues 138–154 (RDMIVSFWFGTRFKACY) are cytoplasmic. Residues 155–166 (LPWVILGFNYII) traverse the membrane as a helical segment. Over 167 to 170 (GGSV) the chain is Lumenal. Residues 171–189 (INELIGNLVGHLYFFLMFR) traverse the membrane as a helical segment. Residues 190-251 (YPMDLGGRNF…WGQGFRLGDQ (62 aa)) are Cytoplasmic-facing. At Ser-201 the chain carries Phosphoserine. At Thr-202 the chain carries Phosphothreonine. Position 226 is a phosphoserine (Ser-226). A disordered region spans residues 229–251 (RAADQNGGGGRHNWGQGFRLGDQ). The short motif at 241-248 (NWGQGFRL) is the SHP-box element.

This sequence belongs to the derlin family. As to quaternary structure, homotetramer. The four subunits of the tetramer are arranged in a twofold symmetry. Forms homo- and heterooligomers with DERL2 and DERL3; binding to DERL3 is poorer than that between DERL2 and DERL3. Interacts (via SHP-box motif) with VCP. Interacts with AMFR, SELENOS, SEL1L, SELENOK and SYVN1, as well as with SEL1L-SYVN1 and VCP-SELENOS protein complexes; this interaction is weaker than that observed between DERL2 and these complexes. Interacts with NGLY1 and YOD1. Does not bind to EDEM1. Interacts with DNAJB9. Interacts with RNF103. Interacts with HM13. Interacts with XBP1 isoform 1 (via luminal/ectodomain domain); the interaction obviates the need for ectodomain shedding prior HM13/SPP-mediated XBP1 isoform 1 cleavage. Interacts with the signal recognition particle/SRP and the SRP receptor; in the process of endoplasmic reticulum stress-induced pre-emptive quality control. May interact with UBXN6. Interacts with ZFAND2B; probably through VCP. Interacts with CCDC47. Interacts with C18orf32. May interact with TRAM1. Forms a complex with SVIP and VCP/p97.

It localises to the endoplasmic reticulum membrane. Its function is as follows. Functional component of endoplasmic reticulum-associated degradation (ERAD) for misfolded lumenal proteins. Forms homotetramers which encircle a large channel traversing the endoplasmic reticulum (ER) membrane. This allows the retrotranslocation of misfolded proteins from the ER into the cytosol where they are ubiquitinated and degraded by the proteasome. The channel has a lateral gate within the membrane which provides direct access to membrane proteins with no need to reenter the ER lumen first. May mediate the interaction between VCP and the misfolded protein. Also involved in endoplasmic reticulum stress-induced pre-emptive quality control, a mechanism that selectively attenuates the translocation of newly synthesized proteins into the endoplasmic reticulum and reroutes them to the cytosol for proteasomal degradation. By controlling the steady-state expression of the IGF1R receptor, indirectly regulates the insulin-like growth factor receptor signaling pathway. The protein is Derlin-1 of Bos taurus (Bovine).